Reading from the N-terminus, the 477-residue chain is MPEPPRDIMAEACEATRPSEDEDEEREPLLPRVAWAQPRRGAPGSAVRLQADQGAAVLREPATEEPPVVSEDRSISASLSTELDRTRNAVSETNTFLEDPEFADVVLKAEQAIEIGVFPERISQGSSGSYFVKDSKRTIIGVFKPKSEEPYGQLNPKWTKYVHKVCCPCCFGRGCLLPNQGYLSEAGAYLVDTKLQLGIVPKTKVVWLVSETFNYSAIDRAKSRGKKYALEKVPKVGRKFHRIGLPPKIGSFQLFVKDYKEAEYWLRRFEAEPLPENIRKQFQSQFERLVILDYIIRNTDRGNDNWLVKYDEMKYAKKIESEESNWIDDKQLLIRIAAIDNGLAFPFKHPDEWRAYPFHWAWLPQAKVPFSEETRNLILPFISDMNFVQDLCEDLYELFKTDKGFDRAAFESQMSVMRGQILNLTQALRDGKSPMQLAQMPCVIVECSKSGGQGRVVHLGSSFTQTVHCRKPFFSSW.

The segment at 1–80 (MPEPPRDIMA…EDRSISASLS (80 aa)) is disordered. S45 carries the phosphoserine modification. In terms of domain architecture, PI3K/PI4K catalytic spans 116 to 447 (GVFPERISQG…AQMPCVIVEC (332 aa)). The G-loop stretch occupies residues 122–128 (ISQGSSG). ATP-binding residues include S129 and K144. An important for substrate binding region spans residues 149-151 (EPY). The segment at 157–170 (KWTKYVHKVCCPCC) is important for interaction with membranes. Residues 253–256 (QLFV) and 267–268 (RR) contribute to the ATP site. The important for interaction with membranes stretch occupies residues 260-268 (KEAEYWLRR). The tract at residues 297–305 (RNTDRGNDN) is catalytic loop. Residues 338-358 (AIDNGLAFPFKHPDEWRAYPF) form an activation loop region. D340 serves as a coordination point for ATP. The interval 353-362 (WRAYPFHWAW) is important for interaction with membranes.

The protein belongs to the PI3/PI4-kinase family. Type II PI4K subfamily.

The protein localises to the cytoplasm. Its subcellular location is the cytosol. It localises to the golgi apparatus membrane. The protein resides in the endoplasmic reticulum membrane. It is found in the cell membrane. The protein localises to the early endosome membrane. The catalysed reaction is a 1,2-diacyl-sn-glycero-3-phospho-(1D-myo-inositol) + ATP = a 1,2-diacyl-sn-glycero-3-phospho-(1D-myo-inositol 4-phosphate) + ADP + H(+). In terms of biological role, together with PI4K2A and the type III PI4Ks (PIK4CA and PIK4CB) it contributes to the overall PI4-kinase activity of the cell. This contribution may be especially significant in plasma membrane, endosomal and Golgi compartments. The phosphorylation of phosphatidylinositol (PI) to PI4P is the first committed step in the generation of phosphatidylinositol 4,5-bisphosphate (PIP2), a precursor of the second messenger inositol 1,4,5-trisphosphate (InsP3). Contributes to the production of InsP3 in stimulated cells and is likely to be involved in the regulation of vesicular trafficking. The sequence is that of Phosphatidylinositol 4-kinase type 2-beta (Pi4k2b) from Rattus norvegicus (Rat).